Here is an 88-residue protein sequence, read N- to C-terminus: Stannin (88 aa).

The Mitochondrial intermembrane segment spans residues 1 to 10; it reads MSIMDHSPTT. A helical membrane pass occupies residues 11–31; that stretch reads GVVTVIVILIAIAALGALILG. The Cytoplasmic segment spans residues 32-88; it reads CWCYLRLQRISQSEDEESIVGDGETKEPFLLVQYSAKGPCVERKAKLMTPNGPEVHG. A Phosphoserine modification is found at serine 49.

Belongs to the stannin family. As to quaternary structure, monomer.

It localises to the mitochondrion outer membrane. In terms of biological role, plays a role in the toxic effects of organotins. Plays a role in endosomal maturation. The polypeptide is Stannin (SNN) (Homo sapiens (Human)).